A 514-amino-acid polypeptide reads, in one-letter code: MGRKKIQIQRITDERNRQVTFTKRKFGLMKKAYELSVLCDCEIALIIFNHSNKLFQYASTDMDKVLLKYTEYNEPHESRTNADIIETLRKKGFNGCDSPEPDGEDSLEQSPLLEDKYRRASEELDGLFRRYGSSVPAPNFAMPVTVPVSNQSSMQFSNPSSSLVTPSLVTSSLTDPRLLSPQQPALQRNSVSPGLPQRPASAGAMLGGDLNSANGACPSPVGNGYVSARASPGLLPVANGNSLNKVIPAKSPPPPTHNTQLGAPSRKPDLRVITSQGGKGLMHHLTEDHLDLNNAQRLGVSQSTHSLTTPVVSVATPSLLSQGLPFSSMPTAYNTDYQLPSAELSSLPAFSSPAGLALGNVTAWQQPQPPQQPQPPQPPQSQPQPPQPQPQQPPQQQPHLVPVSLSNLIPGSPLPHVGAALTVTTHPHISIKSEPVSPSRERSPAPPPPAVFPAARPEPGEGLSSPAGGSYETGDRDDGRGDFGPTLGLLRPAPEPEAEGSAVKRMRLDTWTLK.

An MADS-box domain is found at 3-57; that stretch reads RKKIQIQRITDERNRQVTFTKRKFGLMKKAYELSVLCDCEIALIIFNHSNKLFQY. Residues 58 to 86 constitute a DNA-binding region (mef2-type); sequence ASTDMDKVLLKYTEYNEPHESRTNADIIE. D97, S98, and S106 each carry phosphoserine. A Phosphothreonine modification is found at L107. Position 110 is a phosphoserine (S110). S121 is modified (phosphoserine; by PKA). Positions 174–207 are disordered; the sequence is TDPRLLSPQQPALQRNSVSPGLPQRPASAGAMLG. S180 is subject to Phosphoserine; by MAPK7. Positions 180–192 are enriched in polar residues; that stretch reads SPQQPALQRNSVS. S190 is modified (phosphoserine; by PKA). S231 is subject to Phosphoserine. Residues 244–269 form a disordered region; sequence NKVIPAKSPPPPTHNTQLGAPSRKPD. The residue at position 245 (K245) is an N6-acetyllysine. S251 carries the phosphoserine modification. Residues 286 to 292 are beta domain; the sequence is TEDHLDL. Disordered regions lie at residues 364–399 and 430–514; these read WQQP…QQPH and SIKS…WTLK. Pro residues predominate over residues 367 to 396; that stretch reads PQPPQQPQPPQPPQSQPQPPQPQPQQPPQQ. K432 is modified (N6-acetyllysine; alternate). K432 participates in a covalent cross-link: Glycyl lysine isopeptide (Lys-Gly) (interchain with G-Cter in SUMO); alternate. S437 carries the post-translational modification Phosphoserine.

Belongs to the MEF2 family. Forms a complex with class II HDACs in undifferentiating cells. On myogenic differentiation, HDACs are released into the cytoplasm allowing MEF2s to interact with other proteins for activation. Interacts with HDAC4 (in undifferentiating cells); the interaction translocates MEF2D to nuclear dots. Forms a heterodimer with MEF2A. Interacts with MAPK7; the interaction phosphorylates but does not activate MEF2D. Interacts with MYOG. Interacts with CCAR2 and HDAC3. In terms of processing, phosphorylated on Ser-437 is which is required for Lys-432 sumoylation and inhibits transcriptional activity. Phosphorylation on this residue by CDK5 is dependent on p35 and calpains. Phosphorylated by PKA at Ser-121 and Ser-190 represses transcriptional activity in embryonic and postnatal skeletal muscle, and stabilizes protein levels. No in vitro phosphorylation by PKA on Thr-20. Phosphorylated and activated by CaMK4. Post-translationally, acetylated on Lys-432 by CREBBP. Acetylated by EP300. Deacetylated by SIRT1 and HDAC3. Sumoylated on Lys-432 with SUMO2 but not SUMO1; which inhibits transcriptional activity and myogenic activity. Desumoylated by SENP3. In terms of processing, proteolytically cleaved in cerebellar granule neurons by caspase 7 following neurotoxicity. Preferentially cleaves the CDK5-mediated hyperphosphorylated form which leads to neuron apoptosis and transcriptional inactivation. In terms of tissue distribution, widely expressed though mainly restricted to skeletal and cardiac muscle, brain, neurons and lymphocytes. Differentially expressed depending on if isoforms contain the beta domain or not, with the total expression of the beta domain-lacking isoforms vastly exceeding that of the beta domain-containing isoforms. Isoforms containing the beta domain are expressed primarily in skeletal and cardiac muscle and in brain. Also present in lung and testis. Splicing to include the beta domain is induced in differentiating myocytes. Isoforms lacking the beta domain are expressed less abundantly in skeletal muscle, brain and lymphocytes, and are uniquely found in ovary, liver, spleen and kidney. In embryos, the beta domain-containing and beta domain-lacking isoforms are equally expressed. Also expressed cerebellar granule neurons and other regions of the CNS. Highest levels in the olfactory bulb, cortex, hippocampus, thalamus and cerebellum.

It localises to the nucleus. Its function is as follows. Transcriptional activator which binds specifically to the MEF2 element, 5'-YTA[AT](4)TAR-3', found in numerous muscle-specific, growth factor- and stress-induced genes. Mediates cellular functions not only in skeletal and cardiac muscle development, but also in neuronal differentiation and survival. Plays diverse roles in the control of cell growth, survival and apoptosis via p38 MAPK signaling in muscle-specific and/or growth factor-related transcription. Plays a critical role in the regulation of neuronal apoptosis. This is Myocyte-specific enhancer factor 2D (Mef2d) from Mus musculus (Mouse).